A 397-amino-acid polypeptide reads, in one-letter code: Thioredoxin-interacting protein (397 aa).

Residue Lys-213 forms a Glycyl lysine isopeptide (Lys-Gly) (interchain with G-Cter in ubiquitin) linkage. Position 362 is a phosphoserine (Ser-362).

The protein belongs to the arrestin family. In terms of assembly, homodimer; disulfide-linked. Interacts with TXN/thioredoxin through its redox-active site. Interacts with transcriptional repressors ZBTB16, ZBTB32 and HDAC1. Interacts with DDIT4. In terms of processing, ubiquitinated; undergoes heterotypic 'Lys-48'-/'Lys-63'-branched polyubiquitination catalyzed by ITCH and UBR5 resulting in proteasomal degradation. Deubiquitinated by USP5, leading to TXNIP stabilization. Ubiquitously expressed.

Its subcellular location is the cytoplasm. Its function is as follows. May act as an oxidative stress mediator by inhibiting thioredoxin activity or by limiting its bioavailability. Interacts with COPS5 and restores COPS5-induced suppression of CDKN1B stability, blocking the COPS5-mediated translocation of CDKN1B from the nucleus to the cytoplasm. Functions as a transcriptional repressor, possibly by acting as a bridge molecule between transcription factors and corepressor complexes, and over-expression will induce G0/G1 cell cycle arrest. Required for the maturation of natural killer cells. Acts as a suppressor of tumor cell growth. Inhibits the proteasomal degradation of DDIT4, and thereby contributes to the inhibition of the mammalian target of rapamycin complex 1 (mTORC1). This chain is Thioredoxin-interacting protein (Txnip), found in Mus musculus (Mouse).